Here is a 186-residue protein sequence, read N- to C-terminus: Tumor necrosis factor alpha-induced protein 8-like protein 1 (186 aa).

It belongs to the TNFAIP8 family. As to quaternary structure, interacts with FBXW5; TNFAIP8L1 competes with TSC2 to bind FBXW5 increasing TSC2 stability by preventing its ubiquitination.

Its subcellular location is the cytoplasm. Functionally, acts as a negative regulator of mTOR activity. This chain is Tumor necrosis factor alpha-induced protein 8-like protein 1 (TNFAIP8L1), found in Bos taurus (Bovine).